The sequence spans 124 residues: Succinate dehydrogenase cytochrome b556 subunit (124 aa).

Over 1–29 the chain is Cytoplasmic; the sequence is MTKTKQEIYNKRPTSPHLTIYKPQISSTL. Residues 30–55 form a helical membrane-spanning segment; it reads SILYRMTGVALFFAVSILVWWLILSK. The Periplasmic portion of the chain corresponds to 56 to 67; that stretch reads YDNNYLQLAECC. The helical transmembrane segment at 68–88 threads the bilayer; the sequence is IIKICLVAVSYAWFYHLCNGI. Histidine 83 provides a ligand contact to heme. Topologically, residues 89–103 are cytoplasmic; that stretch reads RHLFWDIGYGFSIKL. The helical transmembrane segment at 104 to 124 threads the bilayer; it reads VNITGWCVVVGSVLLTVLLWV.

It belongs to the cytochrome b560 family. As to quaternary structure, part of an enzyme complex containing four subunits: a flavoprotein, an iron-sulfur protein, plus two membrane-anchoring proteins, SdhC and SdhD. The complex can form homotrimers. Heme is required as a cofactor.

Its subcellular location is the cell inner membrane. It functions in the pathway carbohydrate metabolism; tricarboxylic acid cycle. Functionally, membrane-anchoring subunit of succinate dehydrogenase (SDH). This Rickettsia conorii (strain ATCC VR-613 / Malish 7) protein is Succinate dehydrogenase cytochrome b556 subunit (sdhC).